We begin with the raw amino-acid sequence, 77 residues long: Acyl carrier protein (77 aa).

The Carrier domain occupies 2 to 77 (ADALERVTKI…DAVNYINSKQ (76 aa)). Position 37 is an O-(pantetheine 4'-phosphoryl)serine (serine 37).

It belongs to the acyl carrier protein (ACP) family. Post-translationally, 4'-phosphopantetheine is transferred from CoA to a specific serine of apo-ACP by AcpS. This modification is essential for activity because fatty acids are bound in thioester linkage to the sulfhydryl of the prosthetic group.

The protein localises to the cytoplasm. Its pathway is lipid metabolism; fatty acid biosynthesis. Its function is as follows. Carrier of the growing fatty acid chain in fatty acid biosynthesis. The polypeptide is Acyl carrier protein (Bacillus licheniformis (strain ATCC 14580 / DSM 13 / JCM 2505 / CCUG 7422 / NBRC 12200 / NCIMB 9375 / NCTC 10341 / NRRL NRS-1264 / Gibson 46)).